The primary structure comprises 142 residues: Large ribosomal subunit protein uL11 (142 aa).

Belongs to the universal ribosomal protein uL11 family. As to quaternary structure, part of the ribosomal stalk of the 50S ribosomal subunit. Interacts with L10 and the large rRNA to form the base of the stalk. L10 forms an elongated spine to which L12 dimers bind in a sequential fashion forming a multimeric L10(L12)X complex. One or more lysine residues are methylated.

Functionally, forms part of the ribosomal stalk which helps the ribosome interact with GTP-bound translation factors. This chain is Large ribosomal subunit protein uL11, found in Rhizobium meliloti (strain 1021) (Ensifer meliloti).